The chain runs to 250 residues: Small ribosomal subunit protein uS2 (250 aa).

Belongs to the universal ribosomal protein uS2 family.

The sequence is that of Small ribosomal subunit protein uS2 from Teredinibacter turnerae (strain ATCC 39867 / T7901).